Consider the following 603-residue polypeptide: DNA mismatch repair protein MutL (603 aa).

This sequence belongs to the DNA mismatch repair MutL/HexB family.

Functionally, this protein is involved in the repair of mismatches in DNA. It is required for dam-dependent methyl-directed DNA mismatch repair. May act as a 'molecular matchmaker', a protein that promotes the formation of a stable complex between two or more DNA-binding proteins in an ATP-dependent manner without itself being part of a final effector complex. The sequence is that of DNA mismatch repair protein MutL from Rhodopseudomonas palustris (strain BisA53).